Consider the following 554-residue polypeptide: (E)-beta-caryophyllene synthase (554 aa).

Mn(2+) contacts are provided by Asp-313 and Asp-317. The short motif at 313–317 (DDIYD) is the DDXXD motif element. Homodimerization regions lie at residues 319-325 (YGTLDEL) and 391-427 (EAQWFFSKYKPTMQEYMKVALLSSGYMMMTINSLAVI). Mn(2+) contacts are provided by Asp-457 and Glu-465.

Belongs to the terpene synthase family. Homodimer. Mn(2+) serves as cofactor. The cofactor is Mg(2+). As to expression, expressed in peltate glandular trichomes. Present at low levels in flowers, leaves and stems.

The enzyme catalyses (2E,6E)-farnesyl diphosphate = (-)-(E)-beta-caryophyllene + diphosphate. The catalysed reaction is (2E,6E)-farnesyl diphosphate = alpha-humulene + diphosphate. It participates in secondary metabolite biosynthesis; terpenoid biosynthesis. Involved in the biosynthesis of phenolic sesquiterpenes natural products. Sesquiterpene synthase converting (2E,6E)-farnesyl diphosphate (FPP) to (E)-beta-caryophyllene and alpha-humulene. The polypeptide is (E)-beta-caryophyllene synthase (Origanum vulgare (Wild marjoram)).